We begin with the raw amino-acid sequence, 281 residues long: MYIFFPKLNPIIFTIGPVSARWYGFMYVISFLFAMWYGKKCSIKNKKIWYEKKIETLLYSIFLGSCIGGRIGYIIFYNFSYYSQNMLSVFYIWEGGMSFHGGLIGAIIVMSYFSFKYKKKILEISDFITPLIPFGLGAGRIGNFINSELWGRVSPNFSYAMIFPNSQNQDLKEIKKYPELQLLLDQYGALPRHPTQLYEFFLEGILLFFIIYFFSKKDRPTGSISGLFLIFYGLFRIFIEFFREPDPQIGLLKNIITMGQILSLPMIIAGLIIMYKSYYKK.

3 helical membrane-spanning segments follow: residues 11–31, 57–77, and 89–109; these read IIFT…VISF, LLYS…IIFY, and VFYI…AIIV. A 1,2-diacyl-sn-glycero-3-phospho-(1'-sn-glycerol) is bound at residue R140. A run of 3 helical transmembrane segments spans residues 194 to 214, 222 to 242, and 255 to 275; these read PTQL…IYFF, GSIS…IEFF, and IITM…IIMY.

This sequence belongs to the Lgt family.

Its subcellular location is the cell inner membrane. The enzyme catalyses L-cysteinyl-[prolipoprotein] + a 1,2-diacyl-sn-glycero-3-phospho-(1'-sn-glycerol) = an S-1,2-diacyl-sn-glyceryl-L-cysteinyl-[prolipoprotein] + sn-glycerol 1-phosphate + H(+). The protein operates within protein modification; lipoprotein biosynthesis (diacylglyceryl transfer). Functionally, catalyzes the transfer of the diacylglyceryl group from phosphatidylglycerol to the sulfhydryl group of the N-terminal cysteine of a prolipoprotein, the first step in the formation of mature lipoproteins. This Buchnera aphidicola subsp. Acyrthosiphon pisum (strain APS) (Acyrthosiphon pisum symbiotic bacterium) protein is Phosphatidylglycerol--prolipoprotein diacylglyceryl transferase.